Consider the following 86-residue polypeptide: Latartoxin-1b (86 aa).

The signal sequence occupies residues Met1–Ser19. The propeptide at Ala20–Arg26 is removed in mature form. Residues Glu23–Arg26 carry the Processing quadruplet motif motif. 4 disulfides stabilise this stretch: Cys28–Cys43, Cys35–Cys48, Cys42–Cys65, and Cys50–Cys63.

This sequence belongs to the neurotoxin 19 (CSTX) family. Post-translationally, contains 4 disulfide bonds. In terms of processing, cleavage of the propeptide depends on the processing quadruplet motif (XXXR, with at least one of X being E). Expressed by the venom gland.

Its subcellular location is the secreted. In terms of biological role, insect toxin. This chain is Latartoxin-1b, found in Lachesana tarabaevi (Spider).